The primary structure comprises 1122 residues: Adhesin P1 (1122 aa).

Positions 1–26 (MKKLIFKLSVGITPLALIGLGSFGLA) are cleaved as a signal peptide. Disordered stretches follow at residues 182–208 (ATGD…GGGA), 244–273 (DYNS…GGRT), and 541–562 (GALQ…SNGN). Residues 195-208 (AGGGSSSSAAGGGA) are compositionally biased toward gly residues. Over residues 259–273 (LDSSESSESINGGRT) the composition is skewed to polar residues. The chain crosses the membrane as a helical span at residues 1001 to 1021 (AISIPIIIIALALALGLGIGI). The segment at 1066–1122 (KTPQMLQANKKDGASSPSKPSAPAAKKPAGPTKPSAPGAKPTAPAKPKAPAPTKKIE) is disordered. Positions 1079–1122 (ASSPSKPSAPAAKKPAGPTKPSAPGAKPTAPAKPKAPAPTKKIE) are enriched in low complexity.

The protein belongs to the adhesin P1 family.

The protein localises to the cell membrane. Functionally, could be involved in cytadherence. The sequence is that of Adhesin P1 (gapA) from Mycoplasmoides gallisepticum (strain R(low / passage 15 / clone 2)) (Mycoplasma gallisepticum).